Consider the following 601-residue polypeptide: Oligoendopeptidase F, plasmid (601 aa).

Residue histidine 387 participates in Zn(2+) binding. Glutamate 388 is a catalytic residue. 2 residues coordinate Zn(2+): histidine 391 and histidine 394.

The protein belongs to the peptidase M3B family. Requires Zn(2+) as cofactor.

Functionally, hydrolyzes peptides containing between 7 and 17 amino acids with a rather wide specificity. This Lactococcus lactis subsp. cremoris (Streptococcus cremoris) protein is Oligoendopeptidase F, plasmid (pepF1).